A 134-amino-acid polypeptide reads, in one-letter code: Late embryogenesis abundant protein 6 (134 aa).

The span at 31 to 45 (ERAMARTKEEKEIAH) shows a compositional bias: basic and acidic residues. Disordered regions lie at residues 31 to 53 (ERAM…AKEA) and 80 to 134 (VTDH…HHHY). The stretch at 34–70 (MARTKEEKEIAHQRRKAKEAEANMDMHMAKAAHAEDK) forms a coiled coil. The span at 115–127 (PPQTYHPTYPPTG) shows a compositional bias: low complexity.

The protein belongs to the LEA type 1 family.

Functionally, involved dehydration tolerance. Involved in the adaptive response of vascular plants to withstand water deficit. May possess chaperone-like activity under water deficit. This chain is Late embryogenesis abundant protein 6, found in Arabidopsis thaliana (Mouse-ear cress).